A 233-amino-acid polypeptide reads, in one-letter code: Archaetidylserine synthase (233 aa).

8 helical membrane-spanning segments follow: residues Ile-7 to Leu-27, Ile-29 to Leu-49, Ser-75 to Val-95, Ile-102 to Leu-122, Gly-126 to Leu-146, Thr-147 to Ile-167, Ala-180 to Leu-200, and Val-206 to Ile-226.

It belongs to the CDP-alcohol phosphatidyltransferase class-I family.

It is found in the membrane. The catalysed reaction is CDP-2,3-bis-O-(geranylgeranyl)-sn-glycerol + L-serine = archaetidylserine + CMP + H(+). It catalyses the reaction CDP-2,3-bis-O-(phytanyl)-sn-glycerol + L-serine = 2,3-bis-O-phytanyl-sn-glycero-3-phospho-L-serine + CMP + H(+). Its pathway is membrane lipid metabolism; glycerophospholipid metabolism. Its activity is regulated as follows. Activated by Mn(2+) ions. Its function is as follows. Involved in the lipid biosynthesis. Catalyzes the formation of unsaturated archaetidylserine from CDP-unsaturated archaeol and L-serine. Activity with ester-linked substrate analogs containing straight aliphatic chains (typical bacterial substrates) is two to three times higher than that with the corresponding ether-type substrate (typical archaeal substrates). Both enantiomers of CDP-unsaturated archaeols with ether-linked geranylgeranyl chains and CDP-saturated archaeol with ether-linked phytanyl chains are similarly active. The enzyme also accepts D-serine, although activity is only about third of that with L-serine. This Methanothermobacter thermautotrophicus (strain ATCC 29096 / DSM 1053 / JCM 10044 / NBRC 100330 / Delta H) (Methanobacterium thermoautotrophicum) protein is Archaetidylserine synthase.